The sequence spans 504 residues: Pyruvate kinase (504 aa).

A substrate-binding site is contributed by arginine 53. K(+)-binding residues include asparagine 55, serine 57, aspartate 88, and threonine 89. Residue 55-58 (NFSH) participates in ATP binding. Residues arginine 95 and lysine 181 each contribute to the ATP site. Mg(2+) is bound at residue glutamate 246. Residues glycine 269, aspartate 270, and threonine 302 each contribute to the substrate site. Residue aspartate 270 coordinates Mg(2+).

Belongs to the pyruvate kinase family. Homotetramer. It depends on Mg(2+) as a cofactor. The cofactor is K(+).

It is found in the cytoplasm. The catalysed reaction is pyruvate + ATP = phosphoenolpyruvate + ADP + H(+). It participates in carbohydrate degradation; glycolysis; pyruvate from D-glyceraldehyde 3-phosphate: step 5/5. This Candida albicans (strain SC5314 / ATCC MYA-2876) (Yeast) protein is Pyruvate kinase (CDC19).